The primary structure comprises 111 residues: Cytochrome c (111 aa).

Position 1 is an N-acetylalanine (alanine 1). Residues cysteine 22, cysteine 25, and histidine 26 each contribute to the heme c site. An N6,N6,N6-trimethyllysine modification is found at lysine 80. Residue methionine 88 participates in heme c binding. Lysine 94 is modified (N6,N6,N6-trimethyllysine).

This sequence belongs to the cytochrome c family. Binds 1 heme c group covalently per subunit.

The protein resides in the mitochondrion intermembrane space. Functionally, electron carrier protein. The oxidized form of the cytochrome c heme group can accept an electron from the heme group of the cytochrome c1 subunit of cytochrome reductase. Cytochrome c then transfers this electron to the cytochrome oxidase complex, the final protein carrier in the mitochondrial electron-transport chain. This chain is Cytochrome c, found in Nigella damascena (Love-in-a-mist).